Consider the following 401-residue polypeptide: 1-deoxy-D-xylulose 5-phosphate reductoisomerase (401 aa).

NADPH-binding residues include threonine 11, glycine 12, serine 13, isoleucine 14, arginine 38, asparagine 39, and asparagine 125. Lysine 126 is a binding site for 1-deoxy-D-xylulose 5-phosphate. Position 127 (glutamate 127) interacts with NADPH. A Mn(2+)-binding site is contributed by aspartate 151. Residues serine 152, glutamate 153, serine 179, and histidine 202 each contribute to the 1-deoxy-D-xylulose 5-phosphate site. A Mn(2+)-binding site is contributed by glutamate 153. An NADPH-binding site is contributed by glycine 208. 4 residues coordinate 1-deoxy-D-xylulose 5-phosphate: serine 215, asparagine 220, lysine 221, and glutamate 224. Residue glutamate 224 participates in Mn(2+) binding.

Belongs to the DXR family. Mg(2+) serves as cofactor. It depends on Mn(2+) as a cofactor.

The enzyme catalyses 2-C-methyl-D-erythritol 4-phosphate + NADP(+) = 1-deoxy-D-xylulose 5-phosphate + NADPH + H(+). The protein operates within isoprenoid biosynthesis; isopentenyl diphosphate biosynthesis via DXP pathway; isopentenyl diphosphate from 1-deoxy-D-xylulose 5-phosphate: step 1/6. In terms of biological role, catalyzes the NADPH-dependent rearrangement and reduction of 1-deoxy-D-xylulose-5-phosphate (DXP) to 2-C-methyl-D-erythritol 4-phosphate (MEP). This is 1-deoxy-D-xylulose 5-phosphate reductoisomerase from Paraburkholderia phymatum (strain DSM 17167 / CIP 108236 / LMG 21445 / STM815) (Burkholderia phymatum).